We begin with the raw amino-acid sequence, 296 residues long: Phosphatidylserine decarboxylase proenzyme (296 aa).

Residues Asp-113, His-169, and Ser-256 each act as charge relay system; for autoendoproteolytic cleavage activity in the active site. The active-site Schiff-base intermediate with substrate; via pyruvic acid; for decarboxylase activity is Ser-256. Ser-256 is modified (pyruvic acid (Ser); by autocatalysis).

It belongs to the phosphatidylserine decarboxylase family. PSD-B subfamily. Prokaryotic type II sub-subfamily. In terms of assembly, heterodimer of a large membrane-associated beta subunit and a small pyruvoyl-containing alpha subunit. Pyruvate is required as a cofactor. Is synthesized initially as an inactive proenzyme. Formation of the active enzyme involves a self-maturation process in which the active site pyruvoyl group is generated from an internal serine residue via an autocatalytic post-translational modification. Two non-identical subunits are generated from the proenzyme in this reaction, and the pyruvate is formed at the N-terminus of the alpha chain, which is derived from the carboxyl end of the proenzyme. The autoendoproteolytic cleavage occurs by a canonical serine protease mechanism, in which the side chain hydroxyl group of the serine supplies its oxygen atom to form the C-terminus of the beta chain, while the remainder of the serine residue undergoes an oxidative deamination to produce ammonia and the pyruvoyl prosthetic group on the alpha chain. During this reaction, the Ser that is part of the protease active site of the proenzyme becomes the pyruvoyl prosthetic group, which constitutes an essential element of the active site of the mature decarboxylase.

The protein localises to the cell membrane. It carries out the reaction a 1,2-diacyl-sn-glycero-3-phospho-L-serine + H(+) = a 1,2-diacyl-sn-glycero-3-phosphoethanolamine + CO2. It functions in the pathway phospholipid metabolism; phosphatidylethanolamine biosynthesis; phosphatidylethanolamine from CDP-diacylglycerol: step 2/2. Functionally, catalyzes the formation of phosphatidylethanolamine (PtdEtn) from phosphatidylserine (PtdSer). This chain is Phosphatidylserine decarboxylase proenzyme, found in Clostridium kluyveri (strain ATCC 8527 / DSM 555 / NBRC 12016 / NCIMB 10680 / K1).